We begin with the raw amino-acid sequence, 1049 residues long: Presequence protease, mitochondrial (1049 aa).

Residues 1-39 (MLRSYLHLGRHRTPAFRQPLGRLLRPTASILQYAQSRTL) constitute a mitochondrion transit peptide. Residue histidine 113 participates in Zn(2+) binding. The active-site Proton acceptor is the glutamate 116. Histidine 117 provides a ligand contact to Zn(2+). The active site involves glutamate 189. Residue glutamate 222 coordinates Zn(2+).

It belongs to the peptidase M16 family. PreP subfamily. In terms of assembly, monomer and homodimer; homodimerization is induced by binding of the substrate. Requires Zn(2+) as cofactor.

It localises to the mitochondrion intermembrane space. Its subcellular location is the mitochondrion matrix. Degrades mitochondrial transit peptides after their cleavage in the intermembrane space or in the matrix, and presequence peptides; clearance of these peptides is required to keep the presequence processing machinery running. Preferentially cleaves the N-terminal side of paired basic amino acid residues. Also degrades other unstructured peptides. May function as an ATP-dependent peptidase as opposed to a metalloendopeptidase. This chain is Presequence protease, mitochondrial (cym1), found in Emericella nidulans (strain FGSC A4 / ATCC 38163 / CBS 112.46 / NRRL 194 / M139) (Aspergillus nidulans).